The chain runs to 406 residues: 3-phosphoshikimate 1-carboxyvinyltransferase (406 aa).

3-phosphoshikimate-binding residues include K20, S21, and R25. Phosphoenolpyruvate is bound at residue K20. Phosphoenolpyruvate contacts are provided by G84 and R112. S155, S156, Q157, D295, Q317, and K321 together coordinate 3-phosphoshikimate. A phosphoenolpyruvate-binding site is contributed by Q157. D295 (proton acceptor) is an active-site residue. R325, R366, and K392 together coordinate phosphoenolpyruvate.

It belongs to the EPSP synthase family. In terms of assembly, monomer.

The protein resides in the cytoplasm. It catalyses the reaction 3-phosphoshikimate + phosphoenolpyruvate = 5-O-(1-carboxyvinyl)-3-phosphoshikimate + phosphate. It functions in the pathway metabolic intermediate biosynthesis; chorismate biosynthesis. In terms of biological role, catalyzes the transfer of the enolpyruvyl moiety of phosphoenolpyruvate (PEP) to the 5-hydroxyl of shikimate-3-phosphate (S3P) to produce enolpyruvyl shikimate-3-phosphate and inorganic phosphate. In Pyrococcus furiosus (strain ATCC 43587 / DSM 3638 / JCM 8422 / Vc1), this protein is 3-phosphoshikimate 1-carboxyvinyltransferase.